The sequence spans 209 residues: Protein phosphotransferase ChpT (209 aa).

Phosphohistidine is present on H22.

This sequence belongs to the ChpT phosphotransferase family. As to quaternary structure, homodimer. Forms an asymmetric heterotetramer with CtrA (2:2). There are at least two modes of interaction between ChpT and CtrA, only one of which is competent to catalyze His-Asp phosphoryl transfer. Is phosphorylated by CckA-P on His-22.

It localises to the cytoplasm. Functionally, component of a regulatory phosphorelay system that controls B.abortus cell growth, division, and intracellular survival inside mammalian host cells. This signaling pathway is composed of CckA, ChpT, CtrA and CpdR. ChpT efficiently and specifically shuttles phosphoryl groups from the CckA kinase to the receiver domains of both CtrA and CpdR. Does not bind ATP. Overexpression of chpT results in a defect in cell morphology, DNA content, and intracellular survival in human macrophages. This chain is Protein phosphotransferase ChpT, found in Brucella abortus (strain 2308).